The sequence spans 156 residues: Small ribosomal subunit protein uS7 (156 aa).

The protein belongs to the universal ribosomal protein uS7 family. Part of the 30S ribosomal subunit. Contacts proteins S9 and S11.

In terms of biological role, one of the primary rRNA binding proteins, it binds directly to 16S rRNA where it nucleates assembly of the head domain of the 30S subunit. Is located at the subunit interface close to the decoding center, probably blocks exit of the E-site tRNA. This is Small ribosomal subunit protein uS7 from Frankia casuarinae (strain DSM 45818 / CECT 9043 / HFP020203 / CcI3).